Here is a 287-residue protein sequence, read N- to C-terminus: Pyridoxal kinase PdxY (287 aa).

Substrate-binding positions include Ser10 and Thr45–Gln46. Residues Asp112, Ala144, Glu149, Lys182, and Arg209–Val212 contribute to the ATP site. Asp224 provides a ligand contact to substrate.

Belongs to the pyridoxine kinase family. PdxY subfamily. As to quaternary structure, homodimer. Requires Mg(2+) as cofactor.

It carries out the reaction pyridoxal + ATP = pyridoxal 5'-phosphate + ADP + H(+). Its pathway is cofactor metabolism; pyridoxal 5'-phosphate salvage; pyridoxal 5'-phosphate from pyridoxal: step 1/1. Functionally, pyridoxal kinase involved in the salvage pathway of pyridoxal 5'-phosphate (PLP). Catalyzes the phosphorylation of pyridoxal to PLP. The sequence is that of Pyridoxal kinase PdxY from Shigella flexneri.